Here is a 545-residue protein sequence, read N- to C-terminus: Glucose-6-phosphate isomerase (545 aa).

Glutamate 351 functions as the Proton donor in the catalytic mechanism. Residues histidine 382 and lysine 510 contribute to the active site.

It belongs to the GPI family.

The protein resides in the cytoplasm. The catalysed reaction is alpha-D-glucose 6-phosphate = beta-D-fructose 6-phosphate. The protein operates within carbohydrate biosynthesis; gluconeogenesis. Its pathway is carbohydrate degradation; glycolysis; D-glyceraldehyde 3-phosphate and glycerone phosphate from D-glucose: step 2/4. In terms of biological role, catalyzes the reversible isomerization of glucose-6-phosphate to fructose-6-phosphate. This chain is Glucose-6-phosphate isomerase, found in Shewanella sp. (strain MR-7).